A 250-amino-acid polypeptide reads, in one-letter code: Large ribosomal subunit protein uL29m (250 aa).

The transit peptide at 1 to 24 (MRPGAASIRTTGSVLAFLVPSAQC) directs the protein to the mitochondrion. The disordered stretch occupies residues 66-86 (VLSKKGSGDQPPKPVPITEKV).

The protein belongs to the universal ribosomal protein uL29 family. In terms of assembly, component of the mitochondrial large ribosomal subunit. Mature mitochondrial ribosomes consist of a small (37S) and a large (54S) subunit. The 37S subunit contains at least 33 different proteins and 1 molecule of RNA (15S). The 54S subunit contains at least 45 different proteins and 1 molecule of RNA (21S).

Its subcellular location is the mitochondrion. In Phaeosphaeria nodorum (strain SN15 / ATCC MYA-4574 / FGSC 10173) (Glume blotch fungus), this protein is Large ribosomal subunit protein uL29m (MRPL4).